Here is a 171-residue protein sequence, read N- to C-terminus: Phosphopantetheine adenylyltransferase (171 aa).

Thr10 lines the substrate pocket. Residues 10–11 (TF) and His18 contribute to the ATP site. Lys42, Thr74, and Arg88 together coordinate substrate. Residues 89-91 (GLR), Glu99, and 124-130 (WACLSSK) each bind ATP.

The protein belongs to the bacterial CoaD family. Homohexamer. The cofactor is Mg(2+).

Its subcellular location is the cytoplasm. The catalysed reaction is (R)-4'-phosphopantetheine + ATP + H(+) = 3'-dephospho-CoA + diphosphate. The protein operates within cofactor biosynthesis; coenzyme A biosynthesis; CoA from (R)-pantothenate: step 4/5. Its function is as follows. Reversibly transfers an adenylyl group from ATP to 4'-phosphopantetheine, yielding dephospho-CoA (dPCoA) and pyrophosphate. This Blochmanniella pennsylvanica (strain BPEN) protein is Phosphopantetheine adenylyltransferase.